The following is a 219-amino-acid chain: Adenylate kinase (219 aa).

ATP is bound at residue 10–15 (GAGKGT). An NMP region spans residues 30–59 (STGDMLRAAVKAETPVGLEAKKVMDAGQLV). Residues T31, R36, 57–59 (QLV), 85–88 (GFPR), and Q92 contribute to the AMP site. The LID stretch occupies residues 122-159 (GRRVHLSSGRTYHVLFNPPKQEGLDDETGEPLVQRADD). Residues R123 and 132 to 133 (TY) each bind ATP. Residues R156 and R167 each coordinate AMP. G203 is an ATP binding site.

This sequence belongs to the adenylate kinase family. As to quaternary structure, monomer.

It localises to the cytoplasm. It catalyses the reaction AMP + ATP = 2 ADP. Its pathway is purine metabolism; AMP biosynthesis via salvage pathway; AMP from ADP: step 1/1. Its function is as follows. Catalyzes the reversible transfer of the terminal phosphate group between ATP and AMP. Plays an important role in cellular energy homeostasis and in adenine nucleotide metabolism. This is Adenylate kinase from Chlorobium limicola (strain DSM 245 / NBRC 103803 / 6330).